The primary structure comprises 655 residues: Putative sensor protein Sfri_3689 (655 aa).

The signal sequence occupies residues 1–17 (MKTLLLLLIIITMPVLA). The helical transmembrane segment at 252–272 (FALAILVAIMSAIGMIFTGFI) threads the bilayer. A Histidine kinase domain is found at 419–653 (GIAHEINNPT…QIRLIFALAQ (235 aa)). Position 422 is a phosphohistidine; by autocatalysis (H422).

The protein localises to the cell membrane. The enzyme catalyses ATP + protein L-histidine = ADP + protein N-phospho-L-histidine.. This Shewanella frigidimarina (strain NCIMB 400) protein is Putative sensor protein Sfri_3689.